Here is an 807-residue protein sequence, read N- to C-terminus: uncharacterized protein (807 aa).

The Reverse transcriptase domain maps to 281-566 (IIQSLKSEEF…DKILFLGTNI (286 aa)).

It localises to the mitochondrion. This is an uncharacterized protein from Schizosaccharomyces pombe (strain 972 / ATCC 24843) (Fission yeast).